The sequence spans 137 residues: Ribosomal RNA large subunit methyltransferase H (137 aa).

S-adenosyl-L-methionine contacts are provided by residues L56, G85, and 104-109; that span reads LSPLTF.

Belongs to the RNA methyltransferase RlmH family. As to quaternary structure, homodimer.

It is found in the cytoplasm. It catalyses the reaction pseudouridine(1915) in 23S rRNA + S-adenosyl-L-methionine = N(3)-methylpseudouridine(1915) in 23S rRNA + S-adenosyl-L-homocysteine + H(+). Its function is as follows. Specifically methylates the pseudouridine at position 1915 (m3Psi1915) in 23S rRNA. In Prochlorococcus marinus subsp. pastoris (strain CCMP1986 / NIES-2087 / MED4), this protein is Ribosomal RNA large subunit methyltransferase H.